The sequence spans 1378 residues: DNA-directed RNA polymerase subunit beta (1378 aa).

Belongs to the RNA polymerase beta chain family. As to quaternary structure, the RNAP catalytic core consists of 2 alpha, 1 beta, 1 beta' and 1 omega subunit. When a sigma factor is associated with the core the holoenzyme is formed, which can initiate transcription.

The enzyme catalyses RNA(n) + a ribonucleoside 5'-triphosphate = RNA(n+1) + diphosphate. In terms of biological role, DNA-dependent RNA polymerase catalyzes the transcription of DNA into RNA using the four ribonucleoside triphosphates as substrates. The sequence is that of DNA-directed RNA polymerase subunit beta from Dinoroseobacter shibae (strain DSM 16493 / NCIMB 14021 / DFL 12).